Consider the following 208-residue polypeptide: AN1-type zinc finger protein 6 (208 aa).

Residues Ser-8–Asn-42 form an A20-type zinc finger. Residues Cys-14, Cys-18, Cys-30, and Cys-33 each coordinate Zn(2+). Over residues Gln-41–Asp-68 the composition is skewed to polar residues. A disordered region spans residues Gln-41 to Glu-140. Ser-49 carries the post-translational modification Phosphoserine. Low complexity predominate over residues Ser-80–Ser-94. 2 stretches are compositionally biased toward polar residues: residues Leu-95–Val-110 and Val-120–Glu-133. The segment at Lys-143–Ala-189 adopts an AN1-type zinc-finger fold. Residues Cys-149, Cys-152, Cys-163, Cys-165, Cys-170, His-173, His-179, and Cys-181 each coordinate Zn(2+). An N6-acetyllysine modification is found at Lys-204.

As to quaternary structure, interacts with PKN1. Interacts with TRAF2. Interacts with mono- and polyubiquitin. Interacts with PEX6. Interacts with PEX5 (Cys-linked ubiquitinated). Widely expressed with high level in heart, skeletal muscle, liver, kidney and placenta.

It localises to the cytoplasm. Its function is as follows. Involved in regulation of TNF-alpha induced NF-kappa-B activation and apoptosis. Involved in modulation of 'Lys-48'-linked polyubiquitination status of TRAF2 and decreases association of TRAF2 with RIPK1. Required for PTS1 target sequence-dependent protein import into peroxisomes and PEX5 stability; may cooperate with PEX6. In vitro involved in PEX5 export from the cytosol to peroxisomes. In Homo sapiens (Human), this protein is AN1-type zinc finger protein 6 (ZFAND6).